Consider the following 87-residue polypeptide: uncharacterized protein (87 aa).

This is an uncharacterized protein from Bacillus subtilis (strain 168).